We begin with the raw amino-acid sequence, 190 residues long: Dynactin subunit 6 (190 aa).

Phosphothreonine; by CDK1 is present on T186.

This sequence belongs to the dynactin subunits 5/6 family. Dynactin subunit 6 subfamily. Subunit of dynactin, a multiprotein complex part of a tripartite complex with dynein and a adapter, such as BICDL1, BICD2 or HOOK3. The dynactin complex is built around ACTR1A/ACTB filament and consists of an actin-related filament composed of a shoulder domain, a pointed end and a barbed end. Its length is defined by its flexible shoulder domain. The soulder is composed of 2 DCTN1 subunits, 4 DCTN2 and 2 DCTN3. The 4 DCNT2 (via N-terminus) bind the ACTR1A filament and act as molecular rulers to determine the length. The pointed end is important for binding dynein-dynactin cargo adapters. Consists of 4 subunits: ACTR10, DCNT4, DCTN5 and DCTN6. Within the complex DCTN6 forms a heterodimer with DCTN5. The barbed end is composed of a CAPZA1:CAPZB heterodimers, which binds ACTR1A/ACTB filament and dynactin and stabilizes dynactin. Interacts with PLK1. Interacts with N4BP2L1. Post-translationally, phosphorylation at Thr-186 by CDK1 during mitotic prometaphase creates a binding site for PLK1 that facilitates its recruitment to kinetochores.

The protein resides in the cytoplasm. It is found in the cytoskeleton. It localises to the chromosome. The protein localises to the centromere. Its subcellular location is the kinetochore. Its function is as follows. Part of the dynactin complex that activates the molecular motor dynein for ultra-processive transport along microtubules. The sequence is that of Dynactin subunit 6 (DCTN6) from Pongo abelii (Sumatran orangutan).